We begin with the raw amino-acid sequence, 215 residues long: LexA repressor (215 aa).

The segment at residues 28–48 (RAEIAAELGFSSPNAAEEHLR) is a DNA-binding region (H-T-H motif). Catalysis depends on for autocatalytic cleavage activity residues Ser-133 and Lys-170.

This sequence belongs to the peptidase S24 family. Homodimer.

It catalyses the reaction Hydrolysis of Ala-|-Gly bond in repressor LexA.. Its function is as follows. Represses a number of genes involved in the response to DNA damage (SOS response), including recA and lexA. In the presence of single-stranded DNA, RecA interacts with LexA causing an autocatalytic cleavage which disrupts the DNA-binding part of LexA, leading to derepression of the SOS regulon and eventually DNA repair. The sequence is that of LexA repressor from Burkholderia vietnamiensis (strain G4 / LMG 22486) (Burkholderia cepacia (strain R1808)).